The primary structure comprises 300 residues: F-box associated domain-containing protein sdz-33 (300 aa).

An F-box domain is found at 5–51; sequence PFPILCLPDFVLQKSLKLMGVVEHLCLSILSKNIKQLIATLKGYPKC.

As to expression, expressed in D-type motor neuron cell bodies.

Functionally, substrate recognition component of E3 ubiquitin-protein ligase complex which mediates the ubiquitination and subsequent proteasomal degradation of target proteins such as mdl-1. Positively regulates axon regeneration by targeting mdl-1 for ubiquitin-mediated degradation; probably thereby reducing levels of mdl-1-mxl-1 heterodimers, allowing free mxl-1 to form complexes with tdpt-1 and thus inhibiting tdpt-1-dependent sumoylation of ets-4. The chain is F-box associated domain-containing protein sdz-33 from Caenorhabditis elegans.